Here is a 397-residue protein sequence, read N- to C-terminus: MGSNLAGTQCLDSLDFVLQGGAIDDEQLRITPPEDCFDVNFDFISPPVPRTMPDFGIYEFGSEATSGSLEPGPFMPIEHAATSNPAAEKPNPGALVHVSSMQQESVEQMSALNVEIHRQLSVVSQVAKEYATTEPSLMDSTDQRNRLSSAVVSMIQGLQTFQTLLLEILGAARQGSPKEPASRASMHSSQKNDTSLQTSWTWLNTKNDLSSIADADTGDTISDFETGDRQTISRSDTNSEVRPIPESPSQTTWLDMSTSLLIISCYINLIQLCRDVFAAIRGALSVPGHQTTLLELSGFQISGVSIHEDSDLQIIVLTQVVVRLIDRIGLYLGYSGTSTAEAGKRDESDFNCKTISPQLLDFVLGQKEMEGQPSCKERIEALREEIRKLSEVVYKPI.

A disordered region spans residues 220–249; that stretch reads TISDFETGDRQTISRSDTNSEVRPIPESPS. The span at 229 to 240 shows a compositional bias: polar residues; it reads RQTISRSDTNSE.

Transcription factor; part of the gene cluster that mediates the biosynthesis of xenoacremones such as xenoacremone A, a compound that shows inhibitory activity toward the PI3K/AKT signaling pathway and which has the ability to induce apoptosis of A549 lung cancer cells. Acts as a positive regulator of the xenoacremones biosynthesis gene cluster. The chain is Transcription factor xenB from Xenoacremonium sinensis (Endophyte fungus).